The chain runs to 820 residues: MNESYQPTLIEQLAQEYWEENETFEVKEDLSREKFYCLSMLPYPSGDLHMGHVRNYTIGDVIARYQIHKGRNVLQPMGWDAFGLPAENAAIQRELPPAEWTRKNIKKMRKQLKQLGFAYDWSREITTCDSTYYRWEQWLFLQLYKKGLAYKKNAIVNWDPVDQTVLANEQIVDGRGWRSGAVVERREISQWFLKITDYSEELLKDLDELKEWPEQVITMQRNWIGQSQGVIINFNFEKGPDKLQVYTTRPDTLMGVTYLAIAPEHPLAKERAKKSKKIAAFLKKCKQTRVAEADIATQEKEGIDSGLFAVHPLSKEKLPIWIANFVLMEYASGVVMAVPAHDERDHEFALKYDLPLKPVIEPADGHDWDYNQAAYTNPGKLINSGSFNDIDSKTAFNVIADYLKNNGAGSRQTHYRLRDWGISRQRYWGTPIPIIYCKTCGTVPVPENQLPVLLPEDIIPTGHGSPLKETASFYKTRCPVCNKPATRETDTMDTFVESSWYYARYSCPDQDKVMLDDRAKYWTPVDQYIGGIEHAVMHLLYARFMHKILRDLGLLNSNEPFIRLLTQGMVLKDGAKMSKSKGNVVTPQSLIKKYGADTVRLFIIFAAPPEQDLEWSDSGVEGAYRFLKKLWGFSYRIKDALLAINQQKERSNYQWEAPEHRQTRQQIHECLQQANIDMERLQFNTVVSAVMKILNILIKLTTDNDAEAHLIREGTGILLRLLSPITPHISHHLWQSLGFGGDILDTPWPRPDPKALQTTELELIVQINGKLRGRIQVPTEASKEIIESTALNQENVQRHLADKKIKKVIVVPKKLINIVV.

Residues 42 to 52 (PYPSGDLHMGH) carry the 'HIGH' region motif. Residues 576–580 (KMSKS) carry the 'KMSKS' region motif. K579 serves as a coordination point for ATP.

Belongs to the class-I aminoacyl-tRNA synthetase family.

It localises to the cytoplasm. The enzyme catalyses tRNA(Leu) + L-leucine + ATP = L-leucyl-tRNA(Leu) + AMP + diphosphate. The sequence is that of Leucine--tRNA ligase from Coxiella burnetii (strain RSA 331 / Henzerling II).